The chain runs to 393 residues: Chalcone synthase LF2 (393 aa).

C164 is a catalytic residue.

It belongs to the thiolase-like superfamily. Chalcone/stilbene synthases family.

It carries out the reaction (E)-4-coumaroyl-CoA + 3 malonyl-CoA + 3 H(+) = 2',4,4',6'-tetrahydroxychalcone + 3 CO2 + 4 CoA. Its pathway is secondary metabolite biosynthesis; flavonoid biosynthesis. In terms of biological role, the primary product of this enzyme is 4,2',4',6'-tetrahydroxychalcone (also termed naringenin-chalcone or chalcone) which can under specific conditions spontaneously isomerize into naringenin. The sequence is that of Chalcone synthase LF2 (CHS-LF2) from Ipomoea batatas (Sweet potato).